Here is a 586-residue protein sequence, read N- to C-terminus: Ferredoxin--nitrite reductase, chloroplastic (586 aa).

The span at 1-18 shows a compositional bias: low complexity; the sequence is MTSFSLTFTSPLLPSSST. The interval 1 to 20 is disordered; that stretch reads MTSFSLTFTSPLLPSSSTKP. The N-terminal 25 residues, 1–25, are a transit peptide targeting the chloroplast; that stretch reads MTSFSLTFTSPLLPSSSTKPKRSVL. Residue lysine 103 forms a Glycyl lysine isopeptide (Lys-Gly) (interchain with G-Cter in ubiquitin) linkage. The [4Fe-4S] cluster site is built by cysteine 464, cysteine 470, cysteine 505, and cysteine 509. Siroheme is bound at residue cysteine 509.

This sequence belongs to the nitrite and sulfite reductase 4Fe-4S domain family. In terms of assembly, monomer. Siroheme serves as cofactor. It depends on [4Fe-4S] cluster as a cofactor.

Its subcellular location is the plastid. The protein resides in the chloroplast. The catalysed reaction is 6 oxidized [2Fe-2S]-[ferredoxin] + NH4(+) + 2 H2O = nitrite + 6 reduced [2Fe-2S]-[ferredoxin] + 8 H(+). Its pathway is nitrogen metabolism; nitrate reduction (assimilation). Catalyzes the six-electron reduction of nitrite to ammonium. The sequence is that of Ferredoxin--nitrite reductase, chloroplastic (NIR1) from Arabidopsis thaliana (Mouse-ear cress).